An 81-amino-acid chain; its full sequence is Relaxin-like protein AGF (81 aa).

Cystine bridges form between Cys14–Cys66, Cys26–Cys79, and Cys65–Cys70. An N-linked (GlcNAc...) asparagine glycan is attached at Asn37.

The protein belongs to the insulin family. Heterodimer of a B chain and an A chain linked by two disulfide bonds.

It is found in the secreted. Its function is as follows. Uncertain. The chain is Relaxin-like protein AGF from Hypanus sabinus (Atlantic stingray).